Reading from the N-terminus, the 127-residue chain is Sulfiredoxin (127 aa).

Belongs to the sulfiredoxin family. It depends on Mg(2+) as a cofactor. Forms a transient disulfide bond with TSA1 during the reduction of cysteine sulfinic acid (-SO2H).

It localises to the cytoplasm. Its subcellular location is the nucleus. It carries out the reaction S-hydroxy-S-oxy-L-cysteinyl-[peroxiredoxin] + [protein]-dithiol + ATP = S-hydroxy-L-cysteinyl-[peroxiredoxin] + [protein]-disulfide + ADP + phosphate. Functionally, contributes to oxidative stress resistance by reducing cysteine-sulfinic acid formed under exposure to oxidants in the peroxiredoxin TSA1. May catalyze the reduction in a multi-step process by acting both as a specific phosphotransferase and as thioltransferase. In Saccharomyces cerevisiae (strain ATCC 204508 / S288c) (Baker's yeast), this protein is Sulfiredoxin.